Consider the following 938-residue polypeptide: Isoleucine--tRNA ligase (938 aa).

Positions 58-68 (PYANGSIHIGH) match the 'HIGH' region motif. Lys183 bears the N6-acetyllysine mark. Glu561 serves as a coordination point for L-isoleucyl-5'-AMP. The 'KMSKS' region signature appears at 602-606 (KMSKS). Lys605 serves as a coordination point for ATP. The Zn(2+) site is built by Cys901, Cys904, Cys921, and Cys924.

It belongs to the class-I aminoacyl-tRNA synthetase family. IleS type 1 subfamily. In terms of assembly, monomer. It depends on Zn(2+) as a cofactor.

The protein resides in the cytoplasm. The catalysed reaction is tRNA(Ile) + L-isoleucine + ATP = L-isoleucyl-tRNA(Ile) + AMP + diphosphate. Its function is as follows. Catalyzes the attachment of isoleucine to tRNA(Ile). As IleRS can inadvertently accommodate and process structurally similar amino acids such as valine, to avoid such errors it has two additional distinct tRNA(Ile)-dependent editing activities. One activity is designated as 'pretransfer' editing and involves the hydrolysis of activated Val-AMP. The other activity is designated 'posttransfer' editing and involves deacylation of mischarged Val-tRNA(Ile). The polypeptide is Isoleucine--tRNA ligase (Escherichia coli O7:K1 (strain IAI39 / ExPEC)).